A 99-amino-acid chain; its full sequence is Small ribosomal subunit protein cS23 (99 aa).

It belongs to the chloroplast-specific ribosomal protein cS23 family. In terms of assembly, part of the 30S ribosomal subunit.

Its subcellular location is the plastid. The protein resides in the chloroplast. Its function is as follows. Probably a ribosomal protein or a ribosome-associated protein. The sequence is that of Small ribosomal subunit protein cS23 from Gracilaria tenuistipitata var. liui (Red alga).